The sequence spans 215 residues: Putative zinc finger protein ORF121 (215 aa).

An RING-type; degenerate zinc finger spans residues 53-105 (CVICMEPTYTKKTLAECDIEGGALRVTTMPCPTHYICDNCIRQEMEDKCPICR).

The protein is Putative zinc finger protein ORF121 of Magallana gigas (Pacific oyster).